Here is a 210-residue protein sequence, read N- to C-terminus: Ribosomal RNA large subunit methyltransferase E (210 aa).

5 residues coordinate S-adenosyl-L-methionine: glycine 67, tryptophan 69, aspartate 87, aspartate 103, and aspartate 128. The Proton acceptor role is filled by lysine 168.

Belongs to the class I-like SAM-binding methyltransferase superfamily. RNA methyltransferase RlmE family.

The protein localises to the cytoplasm. It catalyses the reaction uridine(2552) in 23S rRNA + S-adenosyl-L-methionine = 2'-O-methyluridine(2552) in 23S rRNA + S-adenosyl-L-homocysteine + H(+). In terms of biological role, specifically methylates the uridine in position 2552 of 23S rRNA at the 2'-O position of the ribose in the fully assembled 50S ribosomal subunit. This Psychrobacter cryohalolentis (strain ATCC BAA-1226 / DSM 17306 / VKM B-2378 / K5) protein is Ribosomal RNA large subunit methyltransferase E.